The chain runs to 350 residues: D-alanine--D-alanine ligase (350 aa).

The ATP-grasp domain occupies 134 to 337 (KIFAAQRGVK…LPKKHSIKVS (204 aa)). 160–212 (IAYPIILKPARLGSSIGVSVINEEKELDYGRDLAFEYDDTIIAESFKSGVKEY) contacts ATP. The Mg(2+) site is built by D289, E301, and N303.

Belongs to the D-alanine--D-alanine ligase family. The cofactor is Mg(2+). Mn(2+) serves as cofactor.

It is found in the cytoplasm. It carries out the reaction 2 D-alanine + ATP = D-alanyl-D-alanine + ADP + phosphate + H(+). Its pathway is cell wall biogenesis; peptidoglycan biosynthesis. Functionally, cell wall formation. This Helicobacter hepaticus (strain ATCC 51449 / 3B1) protein is D-alanine--D-alanine ligase.